The sequence spans 375 residues: Alcohol dehydrogenase class-3 chain H (375 aa).

N-acetylalanine is present on Ala1. The Zn(2+) site is built by Cys46, His68, Cys98, Cys101, Cys104, Cys112, and Cys175.

It belongs to the zinc-containing alcohol dehydrogenase family. Class-III subfamily. Homodimer or heterodimer with L chain. Zn(2+) serves as cofactor.

Its subcellular location is the cytoplasm. It carries out the reaction a primary alcohol + NAD(+) = an aldehyde + NADH + H(+). The enzyme catalyses a secondary alcohol + NAD(+) = a ketone + NADH + H(+). It catalyses the reaction S-(hydroxymethyl)glutathione + NADP(+) = S-formylglutathione + NADPH + H(+). The catalysed reaction is S-(hydroxymethyl)glutathione + NAD(+) = S-formylglutathione + NADH + H(+). Its function is as follows. Class-III ADH is remarkably ineffective in oxidizing ethanol, but it readily catalyzes the oxidation of long-chain primary alcohols and the oxidation of S-(hydroxymethyl) glutathione. This chain is Alcohol dehydrogenase class-3 chain H, found in Gadus morhua (Atlantic cod).